A 117-amino-acid chain; its full sequence is DNA-directed RNA polymerase II subunit RPB11 (117 aa).

Met1 carries the post-translational modification N-acetylmethionine.

The protein belongs to the archaeal Rpo11/eukaryotic RPB11/RPC19 RNA polymerase subunit family. Component of the RNA polymerase II (Pol II) core complex consisting of 12 subunits: a ten-subunit catalytic core composed of POLR2A/RPB1, POLR2B/RPB2, POLR2C/RPB3, POLR2I/RPB9, POLR2J/RPB11, POLR2E/RPABC1, POLR2F/RPABC2, POLR2H/RPABC3, POLR2K/RPABC4 and POLR2L/RPABC5 and a mobile stalk composed of two subunits POLR2D/RPB4 and POLR2G/RPB7, protruding from the core and functioning primarily in transcription initiation. Part of Pol II(G) complex, in which Pol II core associates with an additional subunit POLR2M; unlike conventional Pol II, Pol II(G) functions as a transcriptional repressor. Part of TBP-based Pol II pre-initiation complex (PIC), in which Pol II core assembles with general transcription factors and other specific initiation factors including GTF2E1, GTF2E2, GTF2F1, GTF2F2, TCEA1, ERCC2, ERCC3, GTF2H2, GTF2H3, GTF2H4, GTF2H5, GTF2A1, GTF2A2, GTF2B and TBP; this large multi-subunit PIC complex mediates DNA unwinding and targets Pol II core to the transcription start site where the first phosphodiester bond forms. Interacts with PTPN6; this interaction promotes the recruitment of RNA pol II to the PCK1 promoter.

The protein resides in the nucleus. DNA-dependent RNA polymerase catalyzes the transcription of DNA into RNA using the four ribonucleoside triphosphates as substrates. Component of RNA polymerase II which synthesizes mRNA precursors and many functional non-coding RNAs. Pol II is the central component of the basal RNA polymerase II transcription machinery. It is composed of mobile elements that move relative to each other. POLR2J/RPB11 is part of the core element with the central large cleft. This is DNA-directed RNA polymerase II subunit RPB11 (POLR2J) from Bos taurus (Bovine).